A 146-amino-acid polypeptide reads, in one-letter code: Transcription antitermination protein NusB (146 aa).

It belongs to the NusB family.

Its function is as follows. Involved in transcription antitermination. Required for transcription of ribosomal RNA (rRNA) genes. Binds specifically to the boxA antiterminator sequence of the ribosomal RNA (rrn) operons. This chain is Transcription antitermination protein NusB, found in Solibacter usitatus (strain Ellin6076).